The following is a 546-amino-acid chain: MKLLASTVLVGAAAASITPQQQVLQNPFKSATKPVSDAWSKSMESLGHLTGSMKGMTAEAKAIWDEVSMLFPEAMEKAAFFSEPKPHTRKPDSTWDYIVKGADIQSVWVENSKGEKEREIDGKLEQYNLRAKKVDPSKLGVDTVKQYSGYLDDEEDDKHLFYWFFESRNDPKNDPVVLWLNGGPGCSSLTGLFLELGPSSIDKNLKLHNNPYSWNANASVIFLDQPVNVGYSYSGSSVSNTVAAGKDVYALLTLFFKQFPEYAKQDFHIAGESYAGHYIPVFTSEILSHKKRNINLKSVLIGNGLTDGLTQYEHYRPMACGDGGWPAVLGASECQAMDNALPRCQSLIQNCYDSESVWSCVPASIYCNNAMMGPYQRTGQNVYDVRGKCEDTSNLCYSALGWISEFLNKADVQKELGVEVSSYDSCNFDINRNFLFQGDWMKPFHRLVPGILEQIPVLIYAGDADFICNWLGNQAWTDALEWPGKKDFNAAKTKDLQLESGHKTGTFKSSGNFTFARIFGAGHMVPMDQPEASLDFLNKWLNDYTL.

Residues 1 to 17 (MKLLASTVLVGAAAASI) form the signal peptide. The propeptide occupies 18–132 (TPQQQVLQNP…KLEQYNLRAK (115 aa)). 5 cysteine pairs are disulfide-bonded: C186–C426, C320–C334, C344–C367, C351–C360, and C389–C396. Residue N217 is glycosylated (N-linked (GlcNAc...) asparagine). S273 is an active-site residue. D465 is a catalytic residue. The N-linked (GlcNAc...) asparagine glycan is linked to N512. H523 is a catalytic residue.

This sequence belongs to the peptidase S10 family.

The protein localises to the vacuole. It catalyses the reaction Release of a C-terminal amino acid with broad specificity.. Functionally, vacuolar carboxypeptidase involved in degradation of small peptides. Digests preferentially peptides containing an aliphatic or hydrophobic residue in P1' position, as well as methionine, leucine or phenylalanine in P1 position of ester substrate. The chain is Carboxypeptidase Y homolog A (CPYA) from Botryotinia fuckeliana (strain B05.10) (Noble rot fungus).